Consider the following 364-residue polypeptide: 3-isopropylmalate dehydrogenase (364 aa).

77–90 (GPKWDNLPTDKRPE) serves as a coordination point for NAD(+). 4 residues coordinate substrate: R97, R107, R135, and D224. Mg(2+) is bound by residues D224, D248, and D252. 281–293 (GSAPDIAGKGIAN) provides a ligand contact to NAD(+).

The protein belongs to the isocitrate and isopropylmalate dehydrogenases family. LeuB type 1 subfamily. Homodimer. The cofactor is Mg(2+). Mn(2+) serves as cofactor.

Its subcellular location is the cytoplasm. It carries out the reaction (2R,3S)-3-isopropylmalate + NAD(+) = 4-methyl-2-oxopentanoate + CO2 + NADH. It functions in the pathway amino-acid biosynthesis; L-leucine biosynthesis; L-leucine from 3-methyl-2-oxobutanoate: step 3/4. Catalyzes the oxidation of 3-carboxy-2-hydroxy-4-methylpentanoate (3-isopropylmalate) to 3-carboxy-4-methyl-2-oxopentanoate. The product decarboxylates to 4-methyl-2 oxopentanoate. This is 3-isopropylmalate dehydrogenase (leuB) from Aquifex aeolicus (strain VF5).